The sequence spans 512 residues: Maturase K (512 aa).

The protein belongs to the intron maturase 2 family. MatK subfamily.

Its subcellular location is the plastid. The protein resides in the chloroplast. In terms of biological role, usually encoded in the trnK tRNA gene intron. Probably assists in splicing its own and other chloroplast group II introns. This chain is Maturase K, found in Lemna minuta (Least duckweed).